Reading from the N-terminus, the 1071-residue chain is DNA-directed RNA polymerase subunit beta (1071 aa).

The protein belongs to the RNA polymerase beta chain family. As to quaternary structure, in plastids the minimal PEP RNA polymerase catalytic core is composed of four subunits: alpha, beta, beta', and beta''. When a (nuclear-encoded) sigma factor is associated with the core the holoenzyme is formed, which can initiate transcription.

Its subcellular location is the plastid. The protein localises to the chloroplast. It catalyses the reaction RNA(n) + a ribonucleoside 5'-triphosphate = RNA(n+1) + diphosphate. Functionally, DNA-dependent RNA polymerase catalyzes the transcription of DNA into RNA using the four ribonucleoside triphosphates as substrates. In Panax ginseng (Korean ginseng), this protein is DNA-directed RNA polymerase subunit beta.